We begin with the raw amino-acid sequence, 911 residues long: FIGNL1-interacting regulator of recombination and mitosis (911 aa).

Positions 830 to 853 (SEKSQPAQTPLTEEPCAKRARQET) are disordered. Residues 844-853 (PCAKRARQET) are compositionally biased toward basic and acidic residues.

The protein resides in the chromosome. It is found in the centromere. Its subcellular location is the kinetochore. The protein localises to the nucleus. It localises to the midbody. The protein resides in the cytoplasm. It is found in the cytoskeleton. Its subcellular location is the spindle. May play a role in chromosome segregation. This is FIGNL1-interacting regulator of recombination and mitosis from Danio rerio (Zebrafish).